Consider the following 193-residue polypeptide: Imidazoleglycerol-phosphate dehydratase (193 aa).

The protein belongs to the imidazoleglycerol-phosphate dehydratase family.

It is found in the cytoplasm. It catalyses the reaction D-erythro-1-(imidazol-4-yl)glycerol 3-phosphate = 3-(imidazol-4-yl)-2-oxopropyl phosphate + H2O. The protein operates within amino-acid biosynthesis; L-histidine biosynthesis; L-histidine from 5-phospho-alpha-D-ribose 1-diphosphate: step 6/9. The polypeptide is Imidazoleglycerol-phosphate dehydratase (Staphylococcus carnosus (strain TM300)).